Here is a 250-residue protein sequence, read N- to C-terminus: Small ribosomal subunit protein uS2 (250 aa).

It belongs to the universal ribosomal protein uS2 family.

The sequence is that of Small ribosomal subunit protein uS2 from Variovorax paradoxus (strain S110).